We begin with the raw amino-acid sequence, 92 residues long: Envelope glycoprotein J (92 aa).

An N-terminal signal peptide occupies residues 1-22 (MDRYAVRTWGIVGILGCAAVGA). At 23 to 49 (APTGPASDTTNATARLPTHPPLIRSGG) the chain is on the extracellular side. The N-linked (GlcNAc...) asparagine; by host glycan is linked to N33. The chain crosses the membrane as a helical span at residues 50–70 (FAVPLIVGGLCLMILGMACLL). Residues 71 to 92 (EVLRRLGRELARCCPHAGQFAP) lie on the Cytoplasmic side of the membrane.

Belongs to the alphaherpesvirinae glycoprotein J family.

It is found in the host Golgi apparatus membrane. It localises to the host endoplasmic reticulum membrane. Its subcellular location is the host endosome membrane. In terms of biological role, functions as an activator of viral protein expression and virus production. In turn, promotes cell-to-cell spread as well as syncytia formation. This chain is Envelope glycoprotein J (gJ), found in Homo sapiens (Human).